Consider the following 340-residue polypeptide: Heat-inducible transcription repressor HrcA (340 aa).

The protein belongs to the HrcA family.

In terms of biological role, negative regulator of class I heat shock genes (grpE-dnaK-dnaJ and groELS operons). Prevents heat-shock induction of these operons. The chain is Heat-inducible transcription repressor HrcA from Phytoplasma australiense.